We begin with the raw amino-acid sequence, 341 residues long: Putative UPF0607 protein FLJ37424 (341 aa).

Disordered stretches follow at residues 72 to 131 (PKTE…NPRP) and 216 to 283 (GLLM…LPCL). The span at 79–101 (EEPKEATEVKDQVETQGQEDNKR) shows a compositional bias: basic and acidic residues. Polar residues predominate over residues 108–127 (EAASTSRPLETQGNLTSSWY). The segment covering 243–252 (AGHRSHKRKL) has biased composition (basic residues).

The protein belongs to the UPF0607 family.

In Homo sapiens (Human), this protein is Putative UPF0607 protein FLJ37424.